Consider the following 182-residue polypeptide: Transcription termination/antitermination protein NusG (182 aa).

One can recognise a KOW domain in the interval 131 to 161; that stretch reads GEVVRVNEGPFADFNGTVEEVDYEKSRLKVS.

It belongs to the NusG family.

In terms of biological role, participates in transcription elongation, termination and antitermination. The polypeptide is Transcription termination/antitermination protein NusG (Vibrio parahaemolyticus serotype O3:K6 (strain RIMD 2210633)).